We begin with the raw amino-acid sequence, 196 residues long: Cell division protein SepF (196 aa).

Residues 15-80 (VEDDEEFNEP…PKRSASTFSK (66 aa)) form a disordered region. Over residues 57–72 (PAQTTPKPQTQTAAPK) the composition is skewed to low complexity.

This sequence belongs to the SepF family. As to quaternary structure, homodimer. Interacts with FtsZ.

The protein resides in the cytoplasm. Functionally, cell division protein that is part of the divisome complex and is recruited early to the Z-ring. Probably stimulates Z-ring formation, perhaps through the cross-linking of FtsZ protofilaments. Its function overlaps with FtsA. This chain is Cell division protein SepF, found in Lactococcus lactis subsp. cremoris (strain MG1363).